The primary structure comprises 219 residues: uncharacterized protein (219 aa).

5 consecutive transmembrane segments (helical) span residues 14–34 (LVYS…FGVL), 37–57 (TLGF…AGAS), 123–143 (FLLG…ALGV), 155–175 (VYSA…LPNL), and 189–209 (VALA…AALA).

The protein belongs to the AzlC family.

The protein localises to the cell membrane. This is an uncharacterized protein from Archaeoglobus fulgidus (strain ATCC 49558 / DSM 4304 / JCM 9628 / NBRC 100126 / VC-16).